We begin with the raw amino-acid sequence, 437 residues long: ATP-dependent protease ATPase subunit HslU (437 aa).

ATP contacts are provided by residues Val18, 60 to 65, Asp250, Glu315, and Arg387; that span reads GCGKTE.

It belongs to the ClpX chaperone family. HslU subfamily. In terms of assembly, a double ring-shaped homohexamer of HslV is capped on each side by a ring-shaped HslU homohexamer. The assembly of the HslU/HslV complex is dependent on binding of ATP.

It is found in the cytoplasm. In terms of biological role, ATPase subunit of a proteasome-like degradation complex; this subunit has chaperone activity. The binding of ATP and its subsequent hydrolysis by HslU are essential for unfolding of protein substrates subsequently hydrolyzed by HslV. HslU recognizes the N-terminal part of its protein substrates and unfolds these before they are guided to HslV for hydrolysis. The polypeptide is ATP-dependent protease ATPase subunit HslU (Methylorubrum populi (strain ATCC BAA-705 / NCIMB 13946 / BJ001) (Methylobacterium populi)).